A 121-amino-acid polypeptide reads, in one-letter code: Large ribosomal subunit protein bL19 (121 aa).

This sequence belongs to the bacterial ribosomal protein bL19 family.

Functionally, this protein is located at the 30S-50S ribosomal subunit interface and may play a role in the structure and function of the aminoacyl-tRNA binding site. The polypeptide is Large ribosomal subunit protein bL19 (Chlorobium phaeovibrioides (strain DSM 265 / 1930) (Prosthecochloris vibrioformis (strain DSM 265))).